Here is a 265-residue protein sequence, read N- to C-terminus: Glutamate racemase (265 aa).

Residues 7–8 (DS) and 39–40 (YG) contribute to the substrate site. The active-site Proton donor/acceptor is the cysteine 70. Residue 71–72 (NT) participates in substrate binding. Cysteine 182 (proton donor/acceptor) is an active-site residue. 183–184 (TH) provides a ligand contact to substrate.

Belongs to the aspartate/glutamate racemases family.

The enzyme catalyses L-glutamate = D-glutamate. It participates in cell wall biogenesis; peptidoglycan biosynthesis. Provides the (R)-glutamate required for cell wall biosynthesis. In Lachnospira eligens (strain ATCC 27750 / DSM 3376 / VPI C15-48 / C15-B4) (Eubacterium eligens), this protein is Glutamate racemase.